The sequence spans 109 residues: Mitochondrial pyruvate carrier 1 (109 aa).

N-acetylalanine is present on Ala-2. Residues 2–20 are Mitochondrial matrix-facing; it reads AGALVRKAADYVRSKDFRD. A helical membrane pass occupies residues 21–41; sequence YLMSTHFWGPVANWGLPIAAI. Residues 42–52 are Mitochondrial intermembrane-facing; the sequence is NDMKKSPEIIS. A helical transmembrane segment spans residues 53–71; sequence GRMTFALCCYSLTFMRFAY. Lys-72 carries the post-translational modification N6-acetyllysine. Residues 72–109 are Mitochondrial matrix-facing; that stretch reads KVQPRNWLLFACHATNEVAQLIQGGRLIKHEMTKTASA.

The protein belongs to the mitochondrial pyruvate carrier (MPC) (TC 2.A.105) family. As to quaternary structure, homodimer. Forms heterodimer with MPC2. The heterodimer is the more stable and dominant form.

It is found in the mitochondrion inner membrane. The enzyme catalyses pyruvate(out) + H(+)(out) = pyruvate(in) + H(+)(in). Functionally, mediates the uptake of pyruvate into mitochondria. In Homo sapiens (Human), this protein is Mitochondrial pyruvate carrier 1 (MPC1).